A 206-amino-acid chain; its full sequence is Guanylate kinase (206 aa).

The Guanylate kinase-like domain maps to Gly-3 to Thr-183. Position 10 to 17 (Ala-10 to Ser-17) interacts with ATP.

It belongs to the guanylate kinase family.

It localises to the cytoplasm. It carries out the reaction GMP + ATP = GDP + ADP. Its function is as follows. Essential for recycling GMP and indirectly, cGMP. This chain is Guanylate kinase, found in Haemophilus ducreyi (strain 35000HP / ATCC 700724).